Consider the following 402-residue polypeptide: Formate-dependent phosphoribosylglycinamide formyltransferase (402 aa).

N(1)-(5-phospho-beta-D-ribosyl)glycinamide contacts are provided by residues 23 to 24 and E83; that span reads EL. Residues R115, K156, 196 to 199, and E204 each bind ATP; that span reads EEFV. Positions 120 to 316 constitute an ATP-grasp domain; that stretch reads RLAAEKVGVP…EFAIHARAVL (197 aa). Residues E274 and E287 each contribute to the Mg(2+) site. N(1)-(5-phospho-beta-D-ribosyl)glycinamide-binding positions include D294, K364, and 371-372; that span reads RR.

It belongs to the PurK/PurT family. In terms of assembly, homodimer.

The enzyme catalyses N(1)-(5-phospho-beta-D-ribosyl)glycinamide + formate + ATP = N(2)-formyl-N(1)-(5-phospho-beta-D-ribosyl)glycinamide + ADP + phosphate + H(+). It functions in the pathway purine metabolism; IMP biosynthesis via de novo pathway; N(2)-formyl-N(1)-(5-phospho-D-ribosyl)glycinamide from N(1)-(5-phospho-D-ribosyl)glycinamide (formate route): step 1/1. Its function is as follows. Involved in the de novo purine biosynthesis. Catalyzes the transfer of formate to 5-phospho-ribosyl-glycinamide (GAR), producing 5-phospho-ribosyl-N-formylglycinamide (FGAR). Formate is provided by PurU via hydrolysis of 10-formyl-tetrahydrofolate. This chain is Formate-dependent phosphoribosylglycinamide formyltransferase, found in Ignicoccus hospitalis (strain KIN4/I / DSM 18386 / JCM 14125).